The following is a 296-amino-acid chain: Farnesyl diphosphate synthase (296 aa).

Isopentenyl diphosphate-binding residues include K46, R49, and H78. Mg(2+) is bound by residues D85 and D91. Residue R96 participates in (2E)-geranyl diphosphate binding. R97 contacts isopentenyl diphosphate. The (2E)-geranyl diphosphate site is built by K182, T183, Q220, and K237.

It belongs to the FPP/GGPP synthase family. It depends on Mg(2+) as a cofactor.

The protein resides in the cytoplasm. It catalyses the reaction isopentenyl diphosphate + (2E)-geranyl diphosphate = (2E,6E)-farnesyl diphosphate + diphosphate. This is Farnesyl diphosphate synthase (ispA) from Bacillus subtilis (strain 168).